Here is a 162-residue protein sequence, read N- to C-terminus: Calcium vector protein (162 aa).

The residue at position 2 (alanine 2) is an N-acetylalanine. 4 EF-hand domains span residues 12–47, 49–84, 86–121, and 123–158; these read EEKD…LGQT, TKRE…KWVR, DDEE…VGEE, and LTDA…SKNA. Lysine 96 is modified (N6,N6,N6-trimethyllysine). Positions 99, 101, 103, and 110 each coordinate Ca(2+). At lysine 117 the chain carries N6,N6,N6-trimethyllysine. Residues aspartate 136, aspartate 138, asparagine 140, and glutamate 147 each coordinate Ca(2+).

It is found in the cytoplasm. Functionally, the exact function of this protein is not yet known. It interacts with CAVPT, a protein also of unknown function, in a calcium-dependent way. This protein binds two calcium ions. The chain is Calcium vector protein from Branchiostoma lanceolatum (Common lancelet).